The primary structure comprises 180 residues: Probable RNA 2'-phosphotransferase (180 aa).

Belongs to the KptA/TPT1 family.

In terms of biological role, removes the 2'-phosphate from RNA via an intermediate in which the phosphate is ADP-ribosylated by NAD followed by a presumed transesterification to release the RNA and generate ADP-ribose 1''-2''-cyclic phosphate (APPR&gt;P). May function as an ADP-ribosylase. This Pectobacterium atrosepticum (strain SCRI 1043 / ATCC BAA-672) (Erwinia carotovora subsp. atroseptica) protein is Probable RNA 2'-phosphotransferase.